Reading from the N-terminus, the 99-residue chain is Putative septation protein SpoVG (99 aa).

Belongs to the SpoVG family.

Its function is as follows. Could be involved in septation. The chain is Putative septation protein SpoVG from Onion yellows phytoplasma (strain OY-M).